Consider the following 570-residue polypeptide: Spermatocyte protein spe-26 (570 aa).

Kelch repeat units lie at residues 244–291 (VLII…IVDG), 293–338 (LYLF…SVVY), 341–393 (RIYV…VFEN), 395–440 (IYVS…NHGN), 442–487 (LLIV…SYKG), and 489–535 (LFSV…VAPN).

As to expression, testis, in both spermatogonial cells and spermatocytes.

Its subcellular location is the cytoplasm. The protein resides in the cytoskeleton. Its function is as follows. May play a role in the spermatocyte cytoskeleton, possibly interacting with actin. This is Spermatocyte protein spe-26 (spe-26) from Caenorhabditis elegans.